Here is a 260-residue protein sequence, read N- to C-terminus: Triosephosphate isomerase (260 aa).

Substrate is bound at residue 11–13 (NWK). His103 functions as the Electrophile in the catalytic mechanism. Glu175 (proton acceptor) is an active-site residue. Substrate-binding positions include Gly181, Ser220, and 241–242 (GG).

The protein belongs to the triosephosphate isomerase family. Homodimer.

It is found in the cytoplasm. The enzyme catalyses D-glyceraldehyde 3-phosphate = dihydroxyacetone phosphate. It participates in carbohydrate biosynthesis; gluconeogenesis. The protein operates within carbohydrate degradation; glycolysis; D-glyceraldehyde 3-phosphate from glycerone phosphate: step 1/1. In terms of biological role, involved in the gluconeogenesis. Catalyzes stereospecifically the conversion of dihydroxyacetone phosphate (DHAP) to D-glyceraldehyde-3-phosphate (G3P). In Shewanella pealeana (strain ATCC 700345 / ANG-SQ1), this protein is Triosephosphate isomerase.